Reading from the N-terminus, the 60-residue chain is Metallothionein A (60 aa).

Residues 1–28 (MDPCECSKSGNCNCGGSCTCTNCSCKSC) form a beta region. A divalent metal cation is bound by residues Cys4, Cys6, Cys12, Cys14, Cys18, Cys20, Cys23, Cys25, Cys28, Cys32, Cys33, Cys35, Cys36, Cys40, Cys43, Cys47, Cys49, Cys54, Cys58, and Cys59. The alpha stretch occupies residues 29-60 (KKSCCPCCPSGCTKCASGCVCIGKTCDTSCCQ).

It belongs to the metallothionein superfamily. Type 1 family.

Its function is as follows. Metallothioneins have a high content of cysteine residues that bind various heavy metals. This chain is Metallothionein A (mta), found in Chaenocephalus aceratus (Blackfin icefish).